The chain runs to 344 residues: N-acetyl-gamma-glutamyl-phosphate reductase (344 aa).

The active site involves Cys150.

It belongs to the NAGSA dehydrogenase family. Type 1 subfamily.

The protein localises to the cytoplasm. It catalyses the reaction N-acetyl-L-glutamate 5-semialdehyde + phosphate + NADP(+) = N-acetyl-L-glutamyl 5-phosphate + NADPH + H(+). The protein operates within amino-acid biosynthesis; L-arginine biosynthesis; N(2)-acetyl-L-ornithine from L-glutamate: step 3/4. In terms of biological role, catalyzes the NADPH-dependent reduction of N-acetyl-5-glutamyl phosphate to yield N-acetyl-L-glutamate 5-semialdehyde. The sequence is that of N-acetyl-gamma-glutamyl-phosphate reductase from Ectopseudomonas mendocina (strain ymp) (Pseudomonas mendocina).